Reading from the N-terminus, the 360-residue chain is D-alanine--D-alanine ligase (360 aa).

Residues 146 to 352 form the ATP-grasp domain; sequence KLCVADAGIA…YRNLITRLLE (207 aa). 179-234 lines the ATP pocket; it reads EAQVSYPLFVKPASLGSSIGISKVHNREELHPALQAACALDWKVVVESTVKGREIE. Mg(2+) is bound by residues Asp305, Glu319, and Asn321.

The protein belongs to the D-alanine--D-alanine ligase family. It depends on Mg(2+) as a cofactor. Mn(2+) is required as a cofactor.

The protein resides in the cytoplasm. It catalyses the reaction 2 D-alanine + ATP = D-alanyl-D-alanine + ADP + phosphate + H(+). It functions in the pathway cell wall biogenesis; peptidoglycan biosynthesis. Cell wall formation. The protein is D-alanine--D-alanine ligase of Chlorobium chlorochromatii (strain CaD3).